Consider the following 785-residue polypeptide: Endonuclease MutS2 (785 aa).

ATP is bound at residue 335-342; that stretch reads GPNTGGKT. The Smr domain maps to 710-785; it reads LDLRGERYED…GNGVTIVEFK (76 aa).

Belongs to the DNA mismatch repair MutS family. MutS2 subfamily. Homodimer. Binds to stalled ribosomes, contacting rRNA.

Its function is as follows. Endonuclease that is involved in the suppression of homologous recombination and thus may have a key role in the control of bacterial genetic diversity. Functionally, acts as a ribosome collision sensor, splitting the ribosome into its 2 subunits. Detects stalled/collided 70S ribosomes which it binds and splits by an ATP-hydrolysis driven conformational change. Acts upstream of the ribosome quality control system (RQC), a ribosome-associated complex that mediates the extraction of incompletely synthesized nascent chains from stalled ribosomes and their subsequent degradation. Probably generates substrates for RQC. The sequence is that of Endonuclease MutS2 from Listeria innocua serovar 6a (strain ATCC BAA-680 / CLIP 11262).